The sequence spans 83 residues: Large ribosomal subunit protein bL27 (83 aa).

The interval 1–26 (MAHKKAGGSSKNGRDSRGQRRGVKRF) is disordered.

Belongs to the bacterial ribosomal protein bL27 family.

The polypeptide is Large ribosomal subunit protein bL27 (Desulfosudis oleivorans (strain DSM 6200 / JCM 39069 / Hxd3) (Desulfococcus oleovorans)).